We begin with the raw amino-acid sequence, 782 residues long: General transcription and DNA repair factor IIH helicase/translocase subunit XPB (782 aa).

A compositionally biased stretch (basic and acidic residues) spans 1-11 (MGKRDRADRDK). Disordered stretches follow at residues 1–51 (MGKR…ESGT) and 218–241 (SAIS…PQGK). The Nuclear localization signal motif lies at 6–18 (RADRDKKKSRKRH). Positions 21 to 30 (DEEDDEEDAP) are enriched in acidic residues. The segment covering 218–236 (SAISKTAESSGGPSTSRVT) has biased composition (polar residues). In terms of domain architecture, Helicase ATP-binding spans 327 to 488 (MFGNGRARSG…DLNFLIGPKL (162 aa)). 340–347 (LPCGAGKS) provides a ligand contact to ATP. Residues 441–444 (DEVH) carry the DEVH box motif. The Helicase C-terminal domain occupies 542–702 (RACQFLIKFH…LAGMEEEDLA (161 aa)). 2 residues coordinate ATP: Arg-642 and Arg-645. The residue at position 686 (Ser-686) is a Phosphoserine. Ser-751 is modified (phosphoserine; by CK2).

This sequence belongs to the helicase family. RAD25/XPB subfamily. As to quaternary structure, component of the 7-subunit TFIIH core complex composed of XPB/ERCC3, XPD/ERCC2, GTF2H1, GTF2H2, GTF2H3, GTF2H4 and GTF2H5, which is active in NER. The core complex associates with the 3-subunit CDK-activating kinase (CAK) module composed of CCNH/cyclin H, CDK7 and MNAT1 to form the 10-subunit holoenzyme (holo-TFIIH) active in transcription. Interacts with PUF60. Interacts with ATF7IP. Interacts with KAT2A; leading to KAT2A recruitment to promoters and acetylation of histones. Part of TBP-based Pol II pre-initiation complex (PIC), in which Pol II core assembles with general transcription factors and other specific initiation factors including GTF2E1, GTF2E2, GTF2F1, GTF2F2, TCEA1, ERCC2, ERCC3, GTF2H2, GTF2H3, GTF2H4, GTF2H5, GTF2A1, GTF2A2, GTF2B and TBP; this large multi-subunit PIC complex mediates DNA unwinding and targets Pol II core to the transcription start site where the first phosphodiester bond forms. In terms of assembly, (Microbial infection) Interacts with Epstein-Barr virus EBNA2. Phosphorylation on Ser-751 by CK2 controls the 5'-excision activity of ERCC1-XPF endonuclease; phosphorylated protein inhibits the excision activity and thus NER. Dephosphorylation reactivates the 5'-excision step. Phosphorylation has no effect on transcription or the 3'-5' helicase activity.

The protein resides in the nucleus. It catalyses the reaction Couples ATP hydrolysis with the unwinding of duplex DNA by translocating in the 3'-5' direction.. The enzyme catalyses ATP + H2O = ADP + phosphate + H(+). With respect to regulation, phosphorylation on Ser-751 by CK2 controls the 5'-excision activity of ERCC1-XPF endonuclease; phosphorylated protein inhibits the excision activity and thus NER. ATPase activity is stimulated by TFIIH subunit p52 (GTF2H4). DNA translocase activity by this subunit in TFIIH is stimulated by XPA, ERCC5/XPG and XFP plus ERCC1; translocase activity is sensitive to triptolide which targets this enzyme. Its function is as follows. ATP-dependent 3'-5' DNA helicase/translocase. Binds dsDNA rather than ssDNA, unzipping it in a translocase rather than classical helicase activity. Component of the general transcription and DNA repair factor IIH (TFIIH) core complex. When complexed to CDK-activating kinase (CAK), involved in RNA transcription by RNA polymerase II. The ATPase activity of XPB/ERCC3, but not its helicase activity, is required for DNA opening; it may wrap around the damaged DNA wedging it open, causing localized melting that allows XPD/ERCC2 helicase to anchor. In transcription, TFIIH has an essential role in transcription initiation. When the pre-initiation complex (PIC) has been established, TFIIH is required for promoter opening and promoter escape. The ATP-dependent helicase activity of XPB/ERCC3 is required for promoter opening and promoter escape. In transcription pre-initiation complexes induces and propagates a DNA twist to open DNA. Also involved in transcription-coupled nucleotide excision repair (NER) of damaged DNA. In NER, TFIIH acts by opening DNA around the lesion to allow the excision of the damaged oligonucleotide and its replacement by a new DNA fragment. The structure of the TFIIH transcription complex differs from the NER-TFIIH complex; large movements by XPD/ERCC2 and XPB/ERCC3 are stabilized by XPA. XPA retains XPB/ERCC3 at the 5' end of a DNA bubble (mimicking DNA damage). The polypeptide is General transcription and DNA repair factor IIH helicase/translocase subunit XPB (Homo sapiens (Human)).